The sequence spans 174 residues: Gamma-crystallin D (174 aa).

Beta/gamma crystallin 'Greek key' domains are found at residues 2–40 (GKITFYEDRGFQGRHYECSTDHSNLQPYFSRCNSVRVDS) and 41–83 (GCWM…RLIP). The connecting peptide stretch occupies residues 84–87 (HAGS). Beta/gamma crystallin 'Greek key' domains lie at 88–128 (HRIR…NVLE) and 129–171 (GCWV…RRVM).

This sequence belongs to the beta/gamma-crystallin family. As to expression, detected in the superior olivary complex of the auditory hindbrain.

In terms of biological role, crystallins are the dominant structural components of the vertebrate eye lens. This is Gamma-crystallin D (Crygd) from Mus musculus (Mouse).